The sequence spans 316 residues: Ribosomal RNA small subunit methyltransferase H (316 aa).

S-adenosyl-L-methionine contacts are provided by residues Gly42–His44, Asp62, Phe86, Asp104, and Gln111.

The protein belongs to the methyltransferase superfamily. RsmH family.

It is found in the cytoplasm. It catalyses the reaction cytidine(1402) in 16S rRNA + S-adenosyl-L-methionine = N(4)-methylcytidine(1402) in 16S rRNA + S-adenosyl-L-homocysteine + H(+). Functionally, specifically methylates the N4 position of cytidine in position 1402 (C1402) of 16S rRNA. The protein is Ribosomal RNA small subunit methyltransferase H of Polynucleobacter necessarius subsp. necessarius (strain STIR1).